The chain runs to 92 residues: Large ribosomal subunit protein uL24c (92 aa).

Belongs to the universal ribosomal protein uL24 family. As to quaternary structure, part of the 50S ribosomal subunit.

Its subcellular location is the plastid. It localises to the chloroplast. Its function is as follows. One of two assembly initiator proteins, it binds directly to the 5'-end of the 23S rRNA, where it nucleates assembly of the 50S subunit. The sequence is that of Large ribosomal subunit protein uL24c (rpl24) from Gracilaria tenuistipitata var. liui (Red alga).